The chain runs to 477 residues: Argininosuccinate lyase (477 aa).

It belongs to the lyase 1 family. Argininosuccinate lyase subfamily.

It localises to the cytoplasm. It catalyses the reaction 2-(N(omega)-L-arginino)succinate = fumarate + L-arginine. Its pathway is amino-acid biosynthesis; L-arginine biosynthesis; L-arginine from L-ornithine and carbamoyl phosphate: step 3/3. The polypeptide is Argininosuccinate lyase (Acinetobacter baumannii (strain AB307-0294)).